Consider the following 380-residue polypeptide: MSTPRVMVGVSGGVDSSVAAWRLVQQGEAVAGLFMQNWADDGSGECRAEDDRRDAVAVCGLLGIPFHFRDFSNEYWQGVFEHFLAEYAAGRTPNPDVLCNREVKFKHFLDAARELGAERIATGHYARVAQRGHQWLLLRGADRSKDQSYFLHQLGQQQLAATLFPIGDLEKTDLRRIARDVSLPTHAKKDSTGICFIGERDFREFLGRYLPAKPGQILDPADGSVIAEHPGVFYFTLGQREGLNIGGVRGRPAAPWYVVGKDVASNVLYVDQDRDSTWMLSNRLRSETAHWIAGAPPARRFECTAQTRYRQPDEPCTVEVLDDGSVLVTFARPQRAVTPGQSLVLYDGDVCLGGAVIAATDAPLEQRLRTTPSPFEVIAA.

ATP-binding positions include 9–16 (GVSGGVDS) and M35. The segment at 94–96 (NPD) is interaction with target base in tRNA. C99 functions as the Nucleophile in the catalytic mechanism. C99 and C195 are oxidised to a cystine. An ATP-binding site is contributed by G123. Positions 145–147 (KDQ) are interaction with tRNA. The active-site Cysteine persulfide intermediate is the C195. The interval 308–309 (RY) is interaction with tRNA.

It belongs to the MnmA/TRMU family.

Its subcellular location is the cytoplasm. The enzyme catalyses S-sulfanyl-L-cysteinyl-[protein] + uridine(34) in tRNA + AH2 + ATP = 2-thiouridine(34) in tRNA + L-cysteinyl-[protein] + A + AMP + diphosphate + H(+). Functionally, catalyzes the 2-thiolation of uridine at the wobble position (U34) of tRNA, leading to the formation of s(2)U34. This chain is tRNA-specific 2-thiouridylase MnmA, found in Stenotrophomonas maltophilia (strain R551-3).